The sequence spans 262 residues: 4-hydroxy-2-oxo-heptane-1,7-dioate aldolase (262 aa).

His45 serves as the catalytic Proton acceptor. Gln147 serves as a coordination point for substrate. Glu149 provides a ligand contact to a divalent metal cation. Positions 174 and 175 each coordinate substrate. Position 175 (Asp175) interacts with a divalent metal cation.

This sequence belongs to the HpcH/HpaI aldolase family. As to quaternary structure, homohexamer; trimer of dimers. The cofactor is a divalent metal cation.

The catalysed reaction is 4-hydroxy-2-oxoheptanedioate = succinate semialdehyde + pyruvate. It participates in aromatic compound metabolism; 4-hydroxyphenylacetate degradation; pyruvate and succinate semialdehyde from 4-hydroxyphenylacetate: step 7/7. Its function is as follows. Catalyzes the reversible retro-aldol cleavage of 4-hydroxy-2-ketoheptane-1,7-dioate (HKHD) to pyruvate and succinic semialdehyde. This is 4-hydroxy-2-oxo-heptane-1,7-dioate aldolase from Shigella boydii serotype 4 (strain Sb227).